The following is a 377-amino-acid chain: Queuine tRNA-ribosyltransferase (377 aa).

The Proton acceptor role is filled by D89. Substrate contacts are provided by residues 89-93 (DSGGF), D143, Q188, and G215. Residues 246-252 (GVGKPED) are RNA binding. D265 serves as the catalytic Nucleophile. The tract at residues 270-274 (TRNAR) is RNA binding; important for wobble base 34 recognition. The Zn(2+) site is built by C303, C305, C308, and H334.

Belongs to the queuine tRNA-ribosyltransferase family. Homodimer. Within each dimer, one monomer is responsible for RNA recognition and catalysis, while the other monomer binds to the replacement base PreQ1. It depends on Zn(2+) as a cofactor.

It catalyses the reaction 7-aminomethyl-7-carbaguanine + guanosine(34) in tRNA = 7-aminomethyl-7-carbaguanosine(34) in tRNA + guanine. It participates in tRNA modification; tRNA-queuosine biosynthesis. Functionally, catalyzes the base-exchange of a guanine (G) residue with the queuine precursor 7-aminomethyl-7-deazaguanine (PreQ1) at position 34 (anticodon wobble position) in tRNAs with GU(N) anticodons (tRNA-Asp, -Asn, -His and -Tyr). Catalysis occurs through a double-displacement mechanism. The nucleophile active site attacks the C1' of nucleotide 34 to detach the guanine base from the RNA, forming a covalent enzyme-RNA intermediate. The proton acceptor active site deprotonates the incoming PreQ1, allowing a nucleophilic attack on the C1' of the ribose to form the product. After dissociation, two additional enzymatic reactions on the tRNA convert PreQ1 to queuine (Q), resulting in the hypermodified nucleoside queuosine (7-(((4,5-cis-dihydroxy-2-cyclopenten-1-yl)amino)methyl)-7-deazaguanosine). This chain is Queuine tRNA-ribosyltransferase, found in Acinetobacter baumannii (strain AB307-0294).